Reading from the N-terminus, the 193-residue chain is Sorting nexin-22 (193 aa).

Residues Met-1 to Glu-21 form a disordered region. A PX domain is found at Met-1–Asn-118. Residues Arg-43, Ser-45, Lys-66, and Arg-79 each coordinate a 1,2-diacyl-sn-glycero-3-phospho-(1D-myo-inositol-3-phosphate).

This sequence belongs to the sorting nexin family. As to quaternary structure, (Microbial infection) Interacts with P.falciparum (strain 3D7) CK1. In terms of tissue distribution, expressed in erythrocytes (at protein level).

It localises to the cytoplasmic vesicle membrane. Its function is as follows. May be involved in several stages of intracellular trafficking. Interacts with membranes containing phosphatidylinositol 3-phosphate (PtdIns(3P)). The sequence is that of Sorting nexin-22 (SNX22) from Homo sapiens (Human).